A 562-amino-acid polypeptide reads, in one-letter code: Protein FAM222B (562 aa).

Composition is skewed to low complexity over residues 147 to 167 (PQAQ…LAHA) and 183 to 201 (ALSH…HPQQ). Disordered regions lie at residues 147 to 242 (PQAQ…PPNV) and 537 to 562 (AHRA…PGYR).

This sequence belongs to the FAM222 family.

The protein is Protein FAM222B (Fam222b) of Mus musculus (Mouse).